A 451-amino-acid chain; its full sequence is Bifunctional protein GlmU (451 aa).

The pyrophosphorylase stretch occupies residues 1 to 217 (MKTLILAAGL…IDEVTGVNDR (217 aa)). UDP-N-acetyl-alpha-D-glucosamine is bound by residues 6 to 9 (LAAG), Lys-20, Gln-68, 73 to 74 (GT), 95 to 97 (YGD), Gly-134, Glu-146, Asn-161, and Asn-215. Residue Asp-97 coordinates Mg(2+). Mg(2+) is bound at residue Asn-215. The linker stretch occupies residues 218 to 238 (IQLSKLEKNMRKRINEKLMRE). Positions 239-451 (GVRIIDPESV…GGNQNADSKE (213 aa)) are N-acetyltransferase. Residues Arg-320 and Lys-338 each coordinate UDP-N-acetyl-alpha-D-glucosamine. His-350 functions as the Proton acceptor in the catalytic mechanism. Residues Tyr-353 and Asn-364 each contribute to the UDP-N-acetyl-alpha-D-glucosamine site. Acetyl-CoA contacts are provided by residues Ala-367, 373-374 (NY), Ser-392, Ala-410, and Arg-427.

In the N-terminal section; belongs to the N-acetylglucosamine-1-phosphate uridyltransferase family. The protein in the C-terminal section; belongs to the transferase hexapeptide repeat family. Homotrimer. It depends on Mg(2+) as a cofactor.

It localises to the cytoplasm. It catalyses the reaction alpha-D-glucosamine 1-phosphate + acetyl-CoA = N-acetyl-alpha-D-glucosamine 1-phosphate + CoA + H(+). The enzyme catalyses N-acetyl-alpha-D-glucosamine 1-phosphate + UTP + H(+) = UDP-N-acetyl-alpha-D-glucosamine + diphosphate. It participates in nucleotide-sugar biosynthesis; UDP-N-acetyl-alpha-D-glucosamine biosynthesis; N-acetyl-alpha-D-glucosamine 1-phosphate from alpha-D-glucosamine 6-phosphate (route II): step 2/2. It functions in the pathway nucleotide-sugar biosynthesis; UDP-N-acetyl-alpha-D-glucosamine biosynthesis; UDP-N-acetyl-alpha-D-glucosamine from N-acetyl-alpha-D-glucosamine 1-phosphate: step 1/1. Its pathway is bacterial outer membrane biogenesis; LPS lipid A biosynthesis. Functionally, catalyzes the last two sequential reactions in the de novo biosynthetic pathway for UDP-N-acetylglucosamine (UDP-GlcNAc). The C-terminal domain catalyzes the transfer of acetyl group from acetyl coenzyme A to glucosamine-1-phosphate (GlcN-1-P) to produce N-acetylglucosamine-1-phosphate (GlcNAc-1-P), which is converted into UDP-GlcNAc by the transfer of uridine 5-monophosphate (from uridine 5-triphosphate), a reaction catalyzed by the N-terminal domain. This chain is Bifunctional protein GlmU, found in Thermosipho africanus (strain TCF52B).